The primary structure comprises 152 residues: Transcriptional regulator MraZ (152 aa).

SpoVT-AbrB domains lie at 5–52 (ATLV…PLPE) and 81–124 (ASEC…DETT).

This sequence belongs to the MraZ family. In terms of assembly, forms oligomers.

The protein localises to the cytoplasm. It localises to the nucleoid. In terms of biological role, negatively regulates its own expression and that of the subsequent genes in the proximal part of the division and cell wall (dcw) gene cluster. Acts by binding directly to DNA. May also regulate the expression of genes outside the dcw cluster. The polypeptide is Transcriptional regulator MraZ (Shigella sonnei (strain Ss046)).